A 48-amino-acid polypeptide reads, in one-letter code: DTDILAAFRVTPQPGVPPEEAGAADVTLGFVDLLRWSPELAAACEIWK.

It belongs to the RuBisCO large chain family. Type I subfamily. Heterohexadecamer of 8 large chains and 8 small chains.

The protein resides in the plastid. Its subcellular location is the chloroplast. It catalyses the reaction 2 (2R)-3-phosphoglycerate + 2 H(+) = D-ribulose 1,5-bisphosphate + CO2 + H2O. It carries out the reaction D-ribulose 1,5-bisphosphate + O2 = 2-phosphoglycolate + (2R)-3-phosphoglycerate + 2 H(+). In terms of biological role, ruBisCO catalyzes two reactions: the carboxylation of D-ribulose 1,5-bisphosphate, the primary event in carbon dioxide fixation, as well as the oxidative fragmentation of the pentose substrate in the photorespiration process. Both reactions occur simultaneously and in competition at the same active site. The sequence is that of Ribulose bisphosphate carboxylase large chain (rbcL) from Pinus pinaster (Maritime pine).